The following is a 240-amino-acid chain: Peptidyl-tRNA hydrolase (240 aa).

Residue Y14 participates in tRNA binding. H19 serves as the catalytic Proton acceptor. TRNA contacts are provided by Y64, N66, and N112. Positions 190–204 are enriched in basic and acidic residues; sequence KADEEKPRKDSEKKP. Residues 190–240 are disordered; the sequence is KADEEKPRKDSEKKPAGQSHIRQARNNNQPKLPATGPMADMLKKMFGNKGE. Polar residues predominate over residues 209–219; sequence HIRQARNNNQP.

Belongs to the PTH family. In terms of assembly, monomer.

It is found in the cytoplasm. It catalyses the reaction an N-acyl-L-alpha-aminoacyl-tRNA + H2O = an N-acyl-L-amino acid + a tRNA + H(+). Its function is as follows. Hydrolyzes ribosome-free peptidyl-tRNAs (with 1 or more amino acids incorporated), which drop off the ribosome during protein synthesis, or as a result of ribosome stalling. In terms of biological role, catalyzes the release of premature peptidyl moieties from peptidyl-tRNA molecules trapped in stalled 50S ribosomal subunits, and thus maintains levels of free tRNAs and 50S ribosomes. In Rhizobium etli (strain ATCC 51251 / DSM 11541 / JCM 21823 / NBRC 15573 / CFN 42), this protein is Peptidyl-tRNA hydrolase.